The primary structure comprises 170 residues: Translocator protein 2 (170 aa).

The next 5 membrane-spanning stretches (helical) occupy residues Leu-3 to Thr-23, Val-45 to Trp-65, Leu-78 to Phe-98, Gly-104 to Trp-124, and Leu-130 to Tyr-150.

This sequence belongs to the TspO/BZRP family. As to quaternary structure, homotetramer. May also form homodimer. Expressed in erythrocytes (at protein level).

Its subcellular location is the endoplasmic reticulum membrane. The protein resides in the cell membrane. Functionally, cholesterol-binding protein involved in the redistribution of cholesterol from lipid droplets to the endoplasmic reticulum. Required to meet cholesterol demands during erythropoietic differentiation. May play a role in transport processes at the plasma membrane of erythrocytes, including regulating VDAC-mediated ATP export, and import of the heme precursors protoporphyrin IX and 5-aminolevulinic acid. This Homo sapiens (Human) protein is Translocator protein 2 (TSPO2).